Here is a 633-residue protein sequence, read N- to C-terminus: Chaperone protein HtpG (633 aa).

The a; substrate-binding stretch occupies residues 1–341 (MTAPHETMSF…SADLPLNVSR (341 aa)). The segment at 342 to 562 (ELLQESRDVK…EGDMSGYLQR (221 aa)) is b. The interval 563–633 (LLKQAGQKAP…YVQRVNKLLA (71 aa)) is c.

Belongs to the heat shock protein 90 family. As to quaternary structure, homodimer.

It localises to the cytoplasm. Functionally, molecular chaperone. Has ATPase activity. The chain is Chaperone protein HtpG from Cupriavidus necator (strain ATCC 17699 / DSM 428 / KCTC 22496 / NCIMB 10442 / H16 / Stanier 337) (Ralstonia eutropha).